A 323-amino-acid polypeptide reads, in one-letter code: MTKTFRNPQLTKNGELKHLLSIEGLSRDMITHILDTASQFVSLSDSDRDVKKVPLLRGKSVFNLFFENSTRTRTTFEIAAKRLSADVLNLNINASSTSKGESLLDTINNLSAMSADMFVVRHASSGAPYLIAEHVAPHVHVINAGDGRHAHPTQGLLDMYTIRHFKKDFTNLTVAIVGDILHSRVARSDIHALTTLGVPEVRAIGPRTLLPSGLEQMGVRVFHSMEEGLKGVDVVIMLRLQNERMSGALLPSAQEYFKAYGLTPERLALAKPDAIVMHPGPMNRGVEIDSAVADGAQSVILNQVTFGIAVRMAVMGIVAGNND.

Residues Arg-71 and Thr-72 each coordinate carbamoyl phosphate. Lys-99 serves as a coordination point for L-aspartate. Arg-121, His-151, and Gln-154 together coordinate carbamoyl phosphate. L-aspartate is bound by residues Arg-184 and Arg-239. Carbamoyl phosphate-binding residues include Gly-280 and Pro-281.

The protein belongs to the aspartate/ornithine carbamoyltransferase superfamily. ATCase family. As to quaternary structure, heterododecamer (2C3:3R2) of six catalytic PyrB chains organized as two trimers (C3), and six regulatory PyrI chains organized as three dimers (R2).

It catalyses the reaction carbamoyl phosphate + L-aspartate = N-carbamoyl-L-aspartate + phosphate + H(+). It participates in pyrimidine metabolism; UMP biosynthesis via de novo pathway; (S)-dihydroorotate from bicarbonate: step 2/3. In terms of biological role, catalyzes the condensation of carbamoyl phosphate and aspartate to form carbamoyl aspartate and inorganic phosphate, the committed step in the de novo pyrimidine nucleotide biosynthesis pathway. The chain is Aspartate carbamoyltransferase catalytic subunit from Cupriavidus taiwanensis (strain DSM 17343 / BCRC 17206 / CCUG 44338 / CIP 107171 / LMG 19424 / R1) (Ralstonia taiwanensis (strain LMG 19424)).